The sequence spans 70 residues: Small ribosomal subunit protein bS21 (70 aa).

It belongs to the bacterial ribosomal protein bS21 family.

This chain is Small ribosomal subunit protein bS21, found in Nitratiruptor sp. (strain SB155-2).